A 316-amino-acid polypeptide reads, in one-letter code: Acetaldehyde dehydrogenase 3 (316 aa).

12 to 15 (SGNI) contributes to the NAD(+) binding site. The Acyl-thioester intermediate role is filled by Cys-132. NAD(+) is bound by residues 163-171 (SAGPGTRAN) and Asn-289.

It belongs to the acetaldehyde dehydrogenase family.

The enzyme catalyses acetaldehyde + NAD(+) + CoA = acetyl-CoA + NADH + H(+). This is Acetaldehyde dehydrogenase 3 (mhpF) from Comamonas testosteroni (Pseudomonas testosteroni).